We begin with the raw amino-acid sequence, 295 residues long: Small ribosomal subunit protein uS2 (295 aa).

This sequence belongs to the universal ribosomal protein uS2 family. Component of the small ribosomal subunit. Mature ribosomes consist of a small (40S) and a large (60S) subunit. The 40S subunit contains about 33 different proteins and 1 molecule of RNA (18S). The 60S subunit contains about 49 different proteins and 3 molecules of RNA (25S, 5.8S and 5S). Interacts with RPS21.

The protein localises to the cytoplasm. Its function is as follows. Required for the assembly and/or stability of the 40S ribosomal subunit. Required for the processing of the 20S rRNA-precursor to mature 18S rRNA in a late step of the maturation of 40S ribosomal subunits. This Paracoccidioides brasiliensis (strain Pb18) protein is Small ribosomal subunit protein uS2.